Here is a 121-residue protein sequence, read N- to C-terminus: Cell division protein FtsB (121 aa).

The Cytoplasmic portion of the chain corresponds to 1–6; the sequence is MRNWRW. Residues 7-24 form a helical membrane-spanning segment; that stretch reads LLLVLAVLLAWLQYRFWF. The Periplasmic portion of the chain corresponds to 25–121; sequence GPGNSGEVMM…AASADPVDHP (97 aa). The stretch at 31 to 66 forms a coiled coil; the sequence is EVMMLEAQVAHQTRDNEGLRQRNQALAAEVKDLKDG. The tract at residues 98-121 is disordered; that stretch reads PPAAQEAAPPAQPPAASADPVDHP.

Belongs to the FtsB family. In terms of assembly, part of a complex composed of FtsB, FtsL and FtsQ.

The protein localises to the cell inner membrane. In terms of biological role, essential cell division protein. May link together the upstream cell division proteins, which are predominantly cytoplasmic, with the downstream cell division proteins, which are predominantly periplasmic. The polypeptide is Cell division protein FtsB (Xanthomonas campestris pv. campestris (strain 8004)).